A 418-amino-acid polypeptide reads, in one-letter code: Glutamyl-tRNA reductase (418 aa).

Substrate is bound by residues 49–52 (TCNR), Ser109, 114–116 (EPQ), and Gln120. The Nucleophile role is filled by Cys50. 189–194 (GAGETI) is an NADP(+) binding site.

The protein belongs to the glutamyl-tRNA reductase family. As to quaternary structure, homodimer.

The catalysed reaction is (S)-4-amino-5-oxopentanoate + tRNA(Glu) + NADP(+) = L-glutamyl-tRNA(Glu) + NADPH + H(+). Its pathway is porphyrin-containing compound metabolism; protoporphyrin-IX biosynthesis; 5-aminolevulinate from L-glutamyl-tRNA(Glu): step 1/2. Its function is as follows. Catalyzes the NADPH-dependent reduction of glutamyl-tRNA(Glu) to glutamate 1-semialdehyde (GSA). The protein is Glutamyl-tRNA reductase of Salmonella heidelberg (strain SL476).